A 193-amino-acid polypeptide reads, in one-letter code: tRNA (cytidine(56)-2'-O)-methyltransferase (193 aa).

S-adenosyl-L-methionine contacts are provided by residues leucine 86 and 115 to 119 (GGEKV).

The protein belongs to the aTrm56 family. Homodimer.

The protein localises to the cytoplasm. The enzyme catalyses cytidine(56) in tRNA + S-adenosyl-L-methionine = 2'-O-methylcytidine(56) in tRNA + S-adenosyl-L-homocysteine + H(+). In terms of biological role, specifically catalyzes the AdoMet-dependent 2'-O-ribose methylation of cytidine at position 56 in tRNAs. In Haloquadratum walsbyi (strain DSM 16790 / HBSQ001), this protein is tRNA (cytidine(56)-2'-O)-methyltransferase.